The chain runs to 576 residues: MAPKSLAEQIADLEDLTPRDYDPEDIERGGNSSDEDVEVKDANAGREHYQAVGKAKLRNEGPVSLGKQYAGSRVSRDALEAESDEDPFRARSSDEESEDESDLEDEDEDGDEDEDEDISEGSEDERPSKSKAHSLKGREDADVGMDSDDSEEDEDGEGFDDGFSDEDEDISGEDDSEDDEDAKEEEEEEEEEEEEEEDDESEDEEEKTAKPKRRVQFANAKVADTSDDRAQLRQLLATDQKTIAATISQAAKADATKGRAVKHQRATFDALLNARIKLQKGLTAANQLATRTQPSEDADTDAFKSAETAALTLWSTLEDLRLTLVDAQTQDDSKKRKRPSPATTSTSTSSLWKRMAELESDSLAHRRAILDKWSLKVRGSATATTLANSKTKLLGTSGAQQTITAVLDAHVASETTDRSSKRLKSTQGSTSDPNEVKVYDDTIFYQSLLRDLVSQRMSSTDAITNGLDTLHILPSRNGAGAIHPITGMRKDKVKREVDTRASKGRKMRFDVHEKLQNFMAPEERGTWTKRAREEFFASLLGRSASGILREDDVSDDEDGEKSDEDVEEGGLRLFRS.

Disordered stretches follow at residues 1-227 (MAPK…DTSD), 328-351 (QTQDDSKKRKRPSPATTSTSTSSL), 414-433 (ETTDRSSKRLKSTQGSTSDP), and 548-576 (LREDDVSDDEDGEKSDEDVEEGGLRLFRS). Over residues 39-49 (VKDANAGREHY) the composition is skewed to basic and acidic residues. Composition is skewed to acidic residues over residues 95–123 (EESEDESDLEDEDEDGDEDEDEDISEGSE) and 142–206 (DVGM…DEEE). The span at 552–568 (DVSDDEDGEKSDEDVEE) shows a compositional bias: acidic residues.

Belongs to the AATF family.

It is found in the nucleus. Its subcellular location is the nucleolus. The polypeptide is Protein bfr2 (bfr2) (Emericella nidulans (strain FGSC A4 / ATCC 38163 / CBS 112.46 / NRRL 194 / M139) (Aspergillus nidulans)).